A 207-amino-acid polypeptide reads, in one-letter code: Putative threonylcarbamoyl-AMP synthase (207 aa).

Positions 15–199 constitute a YrdC-like domain; the sequence is EEERKKVLEF…KIISIREGVI (185 aa).

This sequence belongs to the SUA5 family.

It localises to the cytoplasm. The enzyme catalyses L-threonine + hydrogencarbonate + ATP = L-threonylcarbamoyladenylate + diphosphate + H2O. Functionally, required for the formation of a threonylcarbamoyl group on adenosine at position 37 (t(6)A37) in tRNAs that read codons beginning with adenine. Catalyzes the conversion of L-threonine, HCO(3)(-)/CO(2) and ATP to give threonylcarbamoyl-AMP (TC-AMP) as the acyladenylate intermediate, with the release of diphosphate. In Methanocaldococcus jannaschii (strain ATCC 43067 / DSM 2661 / JAL-1 / JCM 10045 / NBRC 100440) (Methanococcus jannaschii), this protein is Putative threonylcarbamoyl-AMP synthase.